Consider the following 316-residue polypeptide: Protoheme IX farnesyltransferase (316 aa).

Residues 1–21 (MAKSQALGNAPLTSTVAENAT) are disordered. The span at 11-21 (PLTSTVAENAT) shows a compositional bias: polar residues. Helical transmembrane passes span 42 to 62 (VVAMLLLTALVGMCLAVPGIP), 67 to 87 (VILGLIGIGFQSAAAAAFNHV), 115 to 135 (VVFASTLMVMGFVILLELNAL), 136 to 156 (TAWLTMASLVGYAVVYTVWLK), 163 to 183 (IVIGGIAGAAPPLLGWTAVTG), 189 to 209 (ALLLVMLVFTWTPPHFWALAI), 235 to 255 (MVLLYTVMLFIVGLLPWLTGM), 256 to 276 (SGGVYLVGSSLLNLGFIGYAL), and 295 to 315 (IWHLLALFVVLLGDHWITSLM).

This sequence belongs to the UbiA prenyltransferase family. Protoheme IX farnesyltransferase subfamily.

The protein resides in the cell inner membrane. It catalyses the reaction heme b + (2E,6E)-farnesyl diphosphate + H2O = Fe(II)-heme o + diphosphate. It functions in the pathway porphyrin-containing compound metabolism; heme O biosynthesis; heme O from protoheme: step 1/1. Its function is as follows. Converts heme B (protoheme IX) to heme O by substitution of the vinyl group on carbon 2 of heme B porphyrin ring with a hydroxyethyl farnesyl side group. The protein is Protoheme IX farnesyltransferase of Photobacterium profundum (strain SS9).